Reading from the N-terminus, the 554-residue chain is Protein SINE2 (554 aa).

Residues aspartate 17 to alanine 290 are ARMADILLO-type fold. Disordered regions lie at residues cysteine 306–arginine 332, asparagine 411–arginine 442, and glutamate 465–aspartate 487. Positions serine 311 to serine 321 are enriched in low complexity. Residues leucine 322 to arginine 332 show a composition bias toward basic and acidic residues. The span at asparagine 419–arginine 431 shows a compositional bias: basic residues. Residues glutamate 465 to threonine 485 are compositionally biased toward low complexity. The KASH domain occupies leucine 509–threonine 554. Residues leucine 522–leucine 542 traverse the membrane as a helical segment. The Required for nuclear localization motif lies at leucine 551–threonine 554.

As to quaternary structure, interacts with SUN1 and SUN2. In terms of tissue distribution, expressed in epidermal cells, mesophyll cells, trichomes and root cells.

It localises to the nucleus membrane. Its function is as follows. Plays a role in innate immunity against the oomycete pathogen A.arabidopsidis (Hpa). This Arabidopsis thaliana (Mouse-ear cress) protein is Protein SINE2.